A 706-amino-acid polypeptide reads, in one-letter code: Mitochondrial intermediate peptidase, mitochondrial (706 aa).

A mitochondrion-targeting transit peptide spans methionine 1–aspartate 29. The segment at asparagine 212–arginine 238 is disordered. The segment covering threonine 214–arginine 227 has biased composition (low complexity). Histidine 491 lines the Zn(2+) pocket. The active site involves glutamate 492. Zn(2+)-binding residues include histidine 495 and glutamate 520.

Belongs to the peptidase M3 family. It depends on Zn(2+) as a cofactor.

It localises to the mitochondrion. Aminopeptidase which cleaves preproteins, imported into the mitochondrion, to their mature size. Could cleave both preproteins and preprotein intermediates already cleaved by the mitochondrial processing peptidase (MPP). The sequence is that of Mitochondrial intermediate peptidase, mitochondrial from Arabidopsis thaliana (Mouse-ear cress).